A 176-amino-acid chain; its full sequence is Large ribosomal subunit protein eL20 (176 aa).

Residue lysine 11 forms a Glycyl lysine isopeptide (Lys-Gly) (interchain with G-Cter in SUMO2) linkage. Tyrosine 63 carries the phosphotyrosine modification. Serine 71 carries the post-translational modification Phosphoserine. Lysine 76 is subject to N6-succinyllysine. At serine 123 the chain carries Phosphoserine. Residues lysine 128 and lysine 170 each participate in a glycyl lysine isopeptide (Lys-Gly) (interchain with G-Cter in SUMO2) cross-link.

Belongs to the eukaryotic ribosomal protein eL20 family. As to quaternary structure, component of the large ribosomal subunit. Binds IPO9 with high affinity.

The protein resides in the cytoplasm. Functionally, component of the large ribosomal subunit. The ribosome is a large ribonucleoprotein complex responsible for the synthesis of proteins in the cell. In Mus musculus (Mouse), this protein is Large ribosomal subunit protein eL20 (Rpl18a).